A 1238-amino-acid chain; its full sequence is MSTSAKKTPESKTEDKIEPVIEQTSNDKPEPPPNKVDSVITVPTSLINQVIQTASLQENGIVALLNHARYISDINNIHVQSAETHPVPAVGLLGSPSLVSLKYTSTHSSVEFPTTTPHFYAARPIPSDNTSELLRIPPVNVVCDPFPFIPGMAKQYSVSNYNVRLMIDVSHPGIEMIIDPFSISNTKITVDGIQAFDINAFSGGLITDANSGFGSRGMPYIFSLISGLLAVSRKIGRFVMIDNIGNEKNRVLTDRIECPTVPGLSHMRGRFLKDDYERYPHVFEAIPLVTNLPWFRREIEDNVTTVPFGTNHSIPPPNVSNMKVAEYVYCGTDVTMAQFHSNFLDEVSSLRFSHVQYIRLLNSLVVNRNEITGYTTLLQFREYSAAHVPLQLSALDYSTFPYDRRTSDCLRFMVHYSAAFRVAFSDFTSSLISSIIQQSEIKTAADFNATHTGMGNTINNSTTSFHEVLRGFLENIRPTTSHDITRALSLEFFPSFYDLAPTSTHYGAVMATTFLTDLLTLAMTFVMHPVTYSYNPHLKAYAILEFCQAYFNQEVETLLQQSGWGTNVTGIVITDVPSIAPSRIESGVYSFTLLQPVNLQPLVPPPMWNLFTRTLAFLNAPFQTYTVSRPAIAYAQARNVVIPGVPIVPSGPYSRAPPVATYLLSVIQLATTYTTISKQVGLGMSTSKLAAAMTSWRVVVRAMILNFGEWFHGVYCFAAYNAALLYRLIMPYDNTPPTNWQAFPSVQEDLARLNLHNIHNAPRIIPTQAMFPHDDTRTVLGPKHMHSILALYHTPSSAHVCGKLNADKTVADWPDLVSFYYGIDPQEIVEIYKTVLNLASSFGESIQLSSEMSTGDLLSPDLRVLLRSGIMAKVFSARTFQLFAKFLGVGVTDGSIMSQSGSLIDMFNTDPRIYFPNTGMTTVFTDQLIQSNPVGDMIRPAVRNNFRILLDSVFGPEGMMPITSGFTASLEMHSNLRFSLTHSIRQVEIIFGTGHQVQYDDGLRGLHIFSCTANQIDATGQRVPIGNMIAFAHIEQLIDNLSTIVGYSVVRPIAIVPEINQLPAVLVEDIITAFLGNVICLSFPEHRVVRSYAYLSPASVVAATQLERNLVREILEDRTVTHCHHIRIFDTEIIQGVFETTMRKPLLPQRPKCPVELTTHLHTPNARVGGTPINFDRFLPLVEVDASGRLLATNQRGVKRDAITTRPYALRTPLLVWMQSPYQKLEGTVHSQTVRVGI.

The disordered stretch occupies residues 1-35; sequence MSTSAKKTPESKTEDKIEPVIEQTSNDKPEPPPNK. Residues 7–30 are compositionally biased toward basic and acidic residues; the sequence is KTPESKTEDKIEPVIEQTSNDKPE.

This sequence belongs to the turreted BTV-fold inner capsid family. In terms of assembly, homodecamer; each decamer is made up of two conformers of VP2, called VP2A and VP2B. 12 homodecamers assemble to form an icosahedral capsid.

Its subcellular location is the virion. In terms of biological role, inner capsid protein that self-assembles to form an icosahedral capsid with a T=2 symmetry, which consists of 120 copies of VP2, with channels at each of its five-fold vertices. This capsid constitutes the innermost concentric layer of the viral mature particle. In Cryphonectria parasitica (Chestnut blight fungus), this protein is Inner capsid protein VP2 (S2).